We begin with the raw amino-acid sequence, 237 residues long: Protein UL24 homolog (237 aa).

This sequence belongs to the herpesviridae UL24 family.

This is Protein UL24 homolog (20) from Equus caballus (Horse).